Consider the following 187-residue polypeptide: ECF RNA polymerase sigma factor SigW (187 aa).

The sigma-70 factor domain-2 stretch occupies residues M3–D95. The short motif at D47–Q50 is the Polymerase core binding element. The interval E125–L187 is sigma-70 factor domain-4. Positions V166–L184 form a DNA-binding region, H-T-H motif.

This sequence belongs to the sigma-70 factor family. ECF subfamily. As to quaternary structure, interacts transiently with the RNA polymerase catalytic core formed by RpoA, RpoB, RpoC and RpoZ (2 alpha, 1 beta, 1 beta' and 1 omega subunit) to form the RNA polymerase holoenzyme that can initiate transcription. Forms a heterodimer with cognate anti-sigma factor RsiW, which prevents it from binding to the -10 and -35 promoter elements.

Extracytoplasmic function (ECF) sigma factors are held in an inactive form by a cognate anti-sigma factor (RsiW for this protein) until released by regulated membrane proteolysis (RIP). RIP occurs when an extracytoplasmic signal (envelope stress) triggers a concerted proteolytic cascade to transmit information and elicit cellular responses. The anti-sigma factor RsiW is a membrane protein, binding sigma-W in the cytoplasm. RsiW is first cut extracytoplasmically (site-1 protease, S1P, by PrsW), then within the membrane itself (site-2 protease, S2P, by RasP), while cytoplasmic proteases (predominantly ClpX-ClpP) finish degrading the regulatory protein, liberating sigma-W. Its function is as follows. Sigma factors are initiation factors that promote the attachment of RNA polymerase (RNAP) to specific initiation sites and are then released. Sigma-W controls genes involved in response to cell envelope stress such as antimicrobial peptides, alkaline pH, transport processes and detoxification. The chain is ECF RNA polymerase sigma factor SigW (sigW) from Bacillus subtilis (strain 168).